We begin with the raw amino-acid sequence, 211 residues long: MITGKLITVEGPDGAGKTTVLEQLIPLLKQKVAQDILTTREPGGVAISEHIRELILDINHTAMDPKTELLLYIAARRQHLVEKVLPALEAGQLVFIDRFIDSSVAYQGAGRGLIKADIQWLNEFATDGLEPDLTLYFDVPSEIGLARINANQQREVNRLDLETIEIHQRVRKGYLALAKEHPKRIVTIDATKPLKEVVSVALEHVLALLLA.

11-18 lines the ATP pocket; sequence GPDGAGKT.

This sequence belongs to the thymidylate kinase family.

It catalyses the reaction dTMP + ATP = dTDP + ADP. In terms of biological role, phosphorylation of dTMP to form dTDP in both de novo and salvage pathways of dTTP synthesis. This chain is Thymidylate kinase, found in Streptococcus pyogenes serotype M1.